Consider the following 98-residue polypeptide: MSCFDLCRPCGPTPLANSCNEACVRQCQDSRVVIQPSPVVVTLPGPILSSFPQNTLVGSSTSAAVGSILSEEGVPISSGGFGISGLGSRFSGRRCLPC.

It belongs to the avian keratin family. The avian keratins (F-ker, S-ker, C-ker and B-ker) are a complex mixture of very similar polypeptides.

This chain is Feather keratin 3, found in Gallus gallus (Chicken).